The following is a 274-amino-acid chain: MSVQSTIRRKTAPDIRARKGGDPIVMLTSYHAHTASLVDRYCDAILVGDSLGNVMHGFETTVPVTLEMMILQGHAVMRGSQHALVVVDMPFGSYEASKEQAFHSAARILKETHCGAVKLEGGVRMAETIRFLTERGIPVMGHIGLTPQSINTLGSFRAQGREEGSWEPIEADAKAVAEAGAFSVVVEAVAEPLGRKITETIAIPTIGIGASAACDGQVLVLEDMLGLSPKPPKFVKRYGDLGPGIEAAIKGYAEEVRSRAFPGPEHVYGMKSKA.

Mg(2+)-binding residues include Asp49 and Asp88. 3-methyl-2-oxobutanoate-binding positions include 49-50 (DS), Asp88, and Lys118. Glu120 serves as a coordination point for Mg(2+). Glu187 (proton acceptor) is an active-site residue.

Belongs to the PanB family. Homodecamer; pentamer of dimers. It depends on Mg(2+) as a cofactor.

The protein localises to the cytoplasm. It carries out the reaction 3-methyl-2-oxobutanoate + (6R)-5,10-methylene-5,6,7,8-tetrahydrofolate + H2O = 2-dehydropantoate + (6S)-5,6,7,8-tetrahydrofolate. It functions in the pathway cofactor biosynthesis; (R)-pantothenate biosynthesis; (R)-pantoate from 3-methyl-2-oxobutanoate: step 1/2. Catalyzes the reversible reaction in which hydroxymethyl group from 5,10-methylenetetrahydrofolate is transferred onto alpha-ketoisovalerate to form ketopantoate. This is 3-methyl-2-oxobutanoate hydroxymethyltransferase from Rhodopseudomonas palustris (strain TIE-1).